A 1065-amino-acid chain; its full sequence is Valine--tRNA ligase, mitochondrial (1065 aa).

The N-terminal 15 residues, 1–15 (MPHLPLASFRPPLWG), are a transit peptide targeting the mitochondrion. The interval 27 to 52 (ALCTQPEPHGSPVSRRNREAKQKRLR) is disordered. Basic and acidic residues predominate over residues 42-52 (RNREAKQKRLR). Positions 146-156 (PNVTGSLHIGH) match the 'HIGH' region motif. The 'KMSKS' region signature appears at 659-663 (KMSKS). Position 662 (K662) interacts with ATP.

This sequence belongs to the class-I aminoacyl-tRNA synthetase family.

It is found in the mitochondrion. It catalyses the reaction tRNA(Val) + L-valine + ATP = L-valyl-tRNA(Val) + AMP + diphosphate. In terms of biological role, catalyzes the attachment of valine to tRNA(Val) in a two-step reaction: valine is first activated by ATP to form Val-AMP and then transferred to the acceptor end of tRNA(Val). The protein is Valine--tRNA ligase, mitochondrial (Vars2) of Rattus norvegicus (Rat).